The following is a 193-amino-acid chain: Superoxide dismutase [Fe] (193 aa).

4 residues coordinate Fe cation: H27, H74, D157, and H161.

This sequence belongs to the iron/manganese superoxide dismutase family. In terms of assembly, homodimer. The cofactor is Fe cation.

The catalysed reaction is 2 superoxide + 2 H(+) = H2O2 + O2. Its function is as follows. Destroys superoxide anion radicals which are normally produced within the cells and which are toxic to biological systems. The protein is Superoxide dismutase [Fe] (sodB) of Coxiella burnetii (strain RSA 493 / Nine Mile phase I).